Reading from the N-terminus, the 202-residue chain is ATP-dependent Clp protease proteolytic subunit (202 aa).

Catalysis depends on Ser107, which acts as the Nucleophile. The active site involves His132.

This sequence belongs to the peptidase S14 family. In terms of assembly, fourteen ClpP subunits assemble into 2 heptameric rings which stack back to back to give a disk-like structure with a central cavity, resembling the structure of eukaryotic proteasomes.

The protein localises to the cytoplasm. The enzyme catalyses Hydrolysis of proteins to small peptides in the presence of ATP and magnesium. alpha-casein is the usual test substrate. In the absence of ATP, only oligopeptides shorter than five residues are hydrolyzed (such as succinyl-Leu-Tyr-|-NHMec, and Leu-Tyr-Leu-|-Tyr-Trp, in which cleavage of the -Tyr-|-Leu- and -Tyr-|-Trp bonds also occurs).. Its function is as follows. Cleaves peptides in various proteins in a process that requires ATP hydrolysis. Has a chymotrypsin-like activity. Plays a major role in the degradation of misfolded proteins. This Shewanella amazonensis (strain ATCC BAA-1098 / SB2B) protein is ATP-dependent Clp protease proteolytic subunit.